The chain runs to 398 residues: Acetate kinase 2 (398 aa).

A Mg(2+)-binding site is contributed by Asn7. Position 14 (Lys14) interacts with ATP. Position 91 (Arg91) interacts with substrate. Asp148 (proton donor/acceptor) is an active-site residue. ATP contacts are provided by residues 208–212 (HLGNG), 283–285 (DFR), and 331–335 (GVGEN). Mg(2+) is bound at residue Glu384.

This sequence belongs to the acetokinase family. As to quaternary structure, homodimer. Mg(2+) serves as cofactor. Requires Mn(2+) as cofactor.

It is found in the cytoplasm. It catalyses the reaction acetate + ATP = acetyl phosphate + ADP. The protein operates within metabolic intermediate biosynthesis; acetyl-CoA biosynthesis; acetyl-CoA from acetate: step 1/2. Catalyzes the formation of acetyl phosphate from acetate and ATP. Can also catalyze the reverse reaction. The chain is Acetate kinase 2 from Clostridium perfringens (strain 13 / Type A).